The following is a 394-amino-acid chain: 1-deoxy-D-xylulose 5-phosphate reductoisomerase (394 aa).

NADPH is bound by residues threonine 11, glycine 12, serine 13, isoleucine 14, glycine 37, asparagine 39, and asparagine 126. Lysine 127 lines the 1-deoxy-D-xylulose 5-phosphate pocket. Glutamate 128 serves as a coordination point for NADPH. Residue aspartate 152 participates in Mn(2+) binding. 4 residues coordinate 1-deoxy-D-xylulose 5-phosphate: serine 153, glutamate 154, serine 178, and histidine 201. Glutamate 154 contacts Mn(2+). NADPH is bound at residue glycine 207. Serine 214, asparagine 219, lysine 220, and glutamate 223 together coordinate 1-deoxy-D-xylulose 5-phosphate. Glutamate 223 lines the Mn(2+) pocket.

This sequence belongs to the DXR family. The cofactor is Mg(2+). Requires Mn(2+) as cofactor.

It catalyses the reaction 2-C-methyl-D-erythritol 4-phosphate + NADP(+) = 1-deoxy-D-xylulose 5-phosphate + NADPH + H(+). It functions in the pathway isoprenoid biosynthesis; isopentenyl diphosphate biosynthesis via DXP pathway; isopentenyl diphosphate from 1-deoxy-D-xylulose 5-phosphate: step 1/6. In terms of biological role, catalyzes the NADPH-dependent rearrangement and reduction of 1-deoxy-D-xylulose-5-phosphate (DXP) to 2-C-methyl-D-erythritol 4-phosphate (MEP). This chain is 1-deoxy-D-xylulose 5-phosphate reductoisomerase, found in Synechocystis sp. (strain ATCC 27184 / PCC 6803 / Kazusa).